A 582-amino-acid chain; its full sequence is Solute carrier family 15 member 3 (582 aa).

A disordered region spans residues 1–20; that stretch reads MSALRAEQQPSRSGERQPLV. The next 4 membrane-spanning stretches (helical) occupy residues 33 to 53, 77 to 97, 102 to 122, and 155 to 175; these read TAAA…FGVT, LLFL…ADVY, LAIS…LTTI, and PYCA…ASSV. Asparagine 178 is a glycosylation site (N-linked (GlcNAc...) asparagine). A helical transmembrane segment spans residues 201-221; that stretch reads WFYWSINLGAILSLLVVAFIE. Asparagine 223 carries an N-linked (GlcNAc...) asparagine glycan. The next 2 helical transmembrane spans lie at 232–252 and 312–332; these read IIVG…PVFI and FQVL…WMVY. Asparagine 357 carries N-linked (GlcNAc...) asparagine glycosylation. The next 2 membrane-spanning stretches (helical) occupy residues 371–391 and 409–429; these read IPEA…VPVK and LQKM…AGVL. An N-linked (GlcNAc...) asparagine glycan is attached at asparagine 440. The next 3 membrane-spanning stretches (helical) occupy residues 466–485, 498–518, and 541–561; these read YLLI…EFAY, GIFF…VALL, and LYFF…LWIA. Asparagine 575 carries N-linked (GlcNAc...) asparagine glycosylation.

This sequence belongs to the major facilitator superfamily. Proton-dependent oligopeptide transporter (POT/PTR) (TC 2.A.17) family. As to expression, abundant expression in lung, spleen and thymus, and detected faintly in brain, liver, adrenal gland and heart at protein level.

It is found in the lysosome membrane. Its subcellular location is the endosome membrane. The enzyme catalyses N-acetyl-D-muramoyl-L-alanyl-D-isoglutamine(out) + n H(+)(out) = N-acetyl-D-muramoyl-L-alanyl-D-isoglutamine(in) + n H(+)(in). It carries out the reaction glycylglycylglycine(out) + n H(+)(out) = glycylglycylglycine(in) + n H(+)(in). The catalysed reaction is carnosine(out) + n H(+)(out) = carnosine(in) + n H(+)(in). It catalyses the reaction L-histidine(out) + n H(+)(out) = L-histidine(in) + n H(+)(in). Its function is as follows. Proton-coupled amino-acid transporter that transports free histidine and certain di- and tripeptides, and is involved in innate immune response. Also able to transport carnosine. Involved in the detection of microbial pathogens by toll-like receptors (TLRs) and NOD-like receptors (NLRs), probably by mediating transport of bacterial peptidoglycans across the endolysosomal membrane: catalyzes the transport of certain bacterial peptidoglycans, such as muramyl dipeptide (MDP), the NOD2 ligand. This Rattus norvegicus (Rat) protein is Solute carrier family 15 member 3 (Slc15a3).